Here is a 370-residue protein sequence, read N- to C-terminus: Protein phosphatase 2C homolog 2 (370 aa).

The PPM-type phosphatase domain maps to 23–291 (HFGVSHMQGW…DNMTICIVAF (269 aa)). Residues aspartate 63, glycine 64, aspartate 233, and aspartate 282 each contribute to the Mn(2+) site. Serine 355 and serine 357 each carry phosphoserine.

The protein belongs to the PP2C family. As to quaternary structure, monomer. Mg(2+) is required as a cofactor. Requires Mn(2+) as cofactor.

It is found in the nucleus. The protein resides in the cytoplasm. Its subcellular location is the cytosol. It carries out the reaction O-phospho-L-seryl-[protein] + H2O = L-seryl-[protein] + phosphate. The enzyme catalyses O-phospho-L-threonyl-[protein] + H2O = L-threonyl-[protein] + phosphate. Its activity is regulated as follows. Activity is reduced when phosphosrylated at Ser-355/Ser-357. In terms of biological role, dephosphorylating regulator for many key proteins. Has an important role in osmotic stability and cell shape control. It may negatively regulate the osmosensing signal transmitted through wis1 map kinase. The sequence is that of Protein phosphatase 2C homolog 2 (ptc2) from Schizosaccharomyces pombe (strain 972 / ATCC 24843) (Fission yeast).